Reading from the N-terminus, the 102-residue chain is Monothiol glutaredoxin-S4 (102 aa).

The region spanning 1–101 (MDKLQKMISE…PMLKRVGALW (101 aa)) is the Glutaredoxin domain. Residue cysteine 21 coordinates [2Fe-2S] cluster. The Responsive for interaction with TGA factors signature appears at 99 to 102 (ALWL).

This sequence belongs to the glutaredoxin family. CC-type subfamily.

Its subcellular location is the cytoplasm. It localises to the nucleus. May only reduce GSH-thiol disulfides, but not protein disulfides. In Arabidopsis thaliana (Mouse-ear cress), this protein is Monothiol glutaredoxin-S4 (GRXS4).